The chain runs to 281 residues: Acetylglutamate kinase (281 aa).

Residues 64 to 65 (GG), R86, and N179 each bind substrate.

Belongs to the acetylglutamate kinase family. ArgB subfamily.

Its subcellular location is the cytoplasm. It catalyses the reaction N-acetyl-L-glutamate + ATP = N-acetyl-L-glutamyl 5-phosphate + ADP. Its pathway is amino-acid biosynthesis; L-arginine biosynthesis; N(2)-acetyl-L-ornithine from L-glutamate: step 2/4. Catalyzes the ATP-dependent phosphorylation of N-acetyl-L-glutamate. The chain is Acetylglutamate kinase from Campylobacter curvus (strain 525.92).